The following is a 547-amino-acid chain: Chaperonin GroEL (547 aa).

ATP contacts are provided by residues 30-33 (TLGP), Lys51, 87-91 (DGTTT), Gly415, 479-481 (NAA), and Asp495.

This sequence belongs to the chaperonin (HSP60) family. Forms a cylinder of 14 subunits composed of two heptameric rings stacked back-to-back. Interacts with the co-chaperonin GroES.

The protein localises to the cytoplasm. The enzyme catalyses ATP + H2O + a folded polypeptide = ADP + phosphate + an unfolded polypeptide.. Its function is as follows. Together with its co-chaperonin GroES, plays an essential role in assisting protein folding. The GroEL-GroES system forms a nano-cage that allows encapsulation of the non-native substrate proteins and provides a physical environment optimized to promote and accelerate protein folding. The sequence is that of Chaperonin GroEL from Bordetella pertussis (strain Tohama I / ATCC BAA-589 / NCTC 13251).